The primary structure comprises 257 residues: RING-H2 finger protein ATL5 (257 aa).

A helical membrane pass occupies residues 28–48 (IMLASVIILFVAVILILCFHS). The segment at 113 to 155 (CSVCLSEFEEDDEGRVLPKCGHVFHVDCIDTWFRSRSSCPLCR) adopts an RING-type; atypical zinc-finger fold. The tract at residues 181–209 (EDTEAGSSSSSDESESSTPSSSSGSPVRF) is disordered. A compositionally biased stretch (low complexity) spans 185–206 (AGSSSSSDESESSTPSSSSGSP).

The protein belongs to the RING-type zinc finger family. ATL subfamily.

The protein resides in the membrane. The enzyme catalyses S-ubiquitinyl-[E2 ubiquitin-conjugating enzyme]-L-cysteine + [acceptor protein]-L-lysine = [E2 ubiquitin-conjugating enzyme]-L-cysteine + N(6)-ubiquitinyl-[acceptor protein]-L-lysine.. Its pathway is protein modification; protein ubiquitination. This is RING-H2 finger protein ATL5 (ATL5) from Arabidopsis thaliana (Mouse-ear cress).